We begin with the raw amino-acid sequence, 430 residues long: Protein arginine methyltransferase NDUFAF7, mitochondrial (430 aa).

The N-terminal 31 residues, 1 to 31 (MSGLARLRKTAFLMVSASANCRIQRYQSSRT), are a transit peptide targeting the mitochondrion.

Belongs to the NDUFAF7 family.

The protein resides in the mitochondrion. It carries out the reaction L-arginyl-[protein] + 2 S-adenosyl-L-methionine = N(omega),N(omega)'-dimethyl-L-arginyl-[protein] + 2 S-adenosyl-L-homocysteine + 2 H(+). Arginine methyltransferase involved in the assembly or stability of mitochondrial NADH:ubiquinone oxidoreductase complex (complex I). Acts by mediating symmetric dimethylation of 'Arg-118' of ndufs2 after it assembles into the complex I, stabilizing the early intermediate complex. This is Protein arginine methyltransferase NDUFAF7, mitochondrial from Xenopus tropicalis (Western clawed frog).